A 124-amino-acid polypeptide reads, in one-letter code: Non-structural protein 2 (124 aa).

Positions 121-124 match the DLNP; interaction with MAP1B motif; sequence DLNP.

Belongs to the pneumovirus non-structural protein 2 family. Monomer (instable). Homomultimer. Heteromultimer with NS1. Interacts with host RIGI (via N-terminus); this interaction prevents host signaling pathway involved in interferon production. Interacts with host MAP1B/microtubule-associated protein 1B.

Its subcellular location is the host mitochondrion. Plays a major role in antagonizing the type I IFN-mediated antiviral response. Acts cooperatively with NS1 to repress activation and nuclear translocation of host IFN-regulatory factor IRF3. Interacts with the host cytoplasmic sensor of viral nucleic acids RIGI and prevents the interaction with its downstream partner MAVS. Together with NS2, participates in the proteasomal degradation of host STAT2, IRF3, IRF7, TBK1 and RIGI through a NS-degradasome involving CUL2 and Elongin-C. The degradasome requires an intact mitochondrial MAVS. Induces host SOCS1 expression. Induces activation of NF-kappa-B. Suppresses premature apoptosis by an NF-kappa-B-dependent, interferon-independent mechanism promoting continued viral replication. This is Non-structural protein 2 (1B) from Ovine respiratory syncytial virus (strain WSU 83-1578) (ORSV).